The primary structure comprises 204 residues: Large ribosomal subunit protein uL4 (204 aa).

Residues 47-69 (KAQKNRAAVSGGGKKPWRQKGTG) form a disordered region.

Belongs to the universal ribosomal protein uL4 family. As to quaternary structure, part of the 50S ribosomal subunit.

One of the primary rRNA binding proteins, this protein initially binds near the 5'-end of the 23S rRNA. It is important during the early stages of 50S assembly. It makes multiple contacts with different domains of the 23S rRNA in the assembled 50S subunit and ribosome. Its function is as follows. Forms part of the polypeptide exit tunnel. The sequence is that of Large ribosomal subunit protein uL4 from Teredinibacter turnerae (strain ATCC 39867 / T7901).